The sequence spans 517 residues: L-amino-acid oxidase (517 aa).

An N-terminal signal peptide occupies residues Met1 to Cys18. Cys29 and Cys192 are oxidised to a cystine. FAD contacts are provided by residues Met62–Ala63, Glu82–Ala83, Arg90, and Gly106–Arg109. Position 109 (Arg109) interacts with substrate. Asn191 carries an N-linked (GlcNAc...) asparagine glycan. Residue Val280 coordinates FAD. A disulfide bridge connects residues Cys350 and Cys431. Tyr391 provides a ligand contact to substrate. FAD is bound by residues Glu476 and Gly483–Thr488. Residue Gly483–Trp484 coordinates substrate.

It belongs to the flavin monoamine oxidase family. FIG1 subfamily. Homodimer; non-covalently linked. FAD is required as a cofactor. Post-translationally, N-glycosylated. As to expression, expressed by the venom gland.

It is found in the secreted. The enzyme catalyses an L-alpha-amino acid + O2 + H2O = a 2-oxocarboxylate + H2O2 + NH4(+). In terms of biological role, catalyzes an oxidative deamination of predominantly hydrophobic and aromatic L-amino acids, thus producing hydrogen peroxide that may contribute to the diverse toxic effects of this enzyme. Exhibits diverse biological activities, such as hemorrhage, hemolysis, edema, apoptosis of vascular endothelial cells or tumor cell lines, antibacterial and antiparasitic activities, as well as regulation of platelet aggregation. Its effect on platelets is controversial, since it either induces aggregation or inhibits agonist-induced aggregation. These different effects are probably due to different experimental conditions. The polypeptide is L-amino-acid oxidase (Demansia vestigiata (Lesser black whip snake)).